A 51-amino-acid chain; its full sequence is Ovomucoid (51 aa).

Residues 3–51 (VDCSGYPKPACTLEYFPLCGSDNQTYANKCTFCNAVVEKNVTLNHLGEC) enclose the Kazal-like domain. Intrachain disulfides connect C5–C35, C13–C32, and C21–C51. N42 carries an N-linked (GlcNAc...) asparagine glycan.

The protein localises to the secreted. The protein is Ovomucoid of Nothoprocta perdicaria (Chilean tinamou).